A 158-amino-acid chain; its full sequence is 6,7-dimethyl-8-ribityllumazine synthase (158 aa).

Residues F23, 61-63 (SFE), and 85-87 (AVI) each bind 5-amino-6-(D-ribitylamino)uracil. Residue 90–91 (ET) participates in (2S)-2-hydroxy-3-oxobutyl phosphate binding. H93 serves as the catalytic Proton donor. 5-amino-6-(D-ribitylamino)uracil is bound at residue F118. R132 serves as a coordination point for (2S)-2-hydroxy-3-oxobutyl phosphate.

The protein belongs to the DMRL synthase family.

The catalysed reaction is (2S)-2-hydroxy-3-oxobutyl phosphate + 5-amino-6-(D-ribitylamino)uracil = 6,7-dimethyl-8-(1-D-ribityl)lumazine + phosphate + 2 H2O + H(+). Its pathway is cofactor biosynthesis; riboflavin biosynthesis; riboflavin from 2-hydroxy-3-oxobutyl phosphate and 5-amino-6-(D-ribitylamino)uracil: step 1/2. Catalyzes the formation of 6,7-dimethyl-8-ribityllumazine by condensation of 5-amino-6-(D-ribitylamino)uracil with 3,4-dihydroxy-2-butanone 4-phosphate. This is the penultimate step in the biosynthesis of riboflavin. The sequence is that of 6,7-dimethyl-8-ribityllumazine synthase from Prochlorococcus marinus (strain AS9601).